A 442-amino-acid chain; its full sequence is Lipoyl synthase, apicoplast (442 aa).

The signal sequence occupies residues 1–25; the sequence is MHVLTPSLYIYAFFIVCVRLKCGRS. Residues 92 to 154 are disordered; it reads LLRSESATDE…EKKPDWFHVP (63 aa). The segment covering 109 to 127 has biased composition (basic and acidic residues); that stretch reads LKEKLKESPANWGKDKQEE. Cys177, Cys182, Cys188, Cys203, Cys207, Cys210, and Ser418 together coordinate [4Fe-4S] cluster. Residues 189–407 form the Radical SAM core domain; that stretch reads WNIGTATIML…KEEGMKMGFK (219 aa).

It belongs to the radical SAM superfamily. Lipoyl synthase family. It depends on [4Fe-4S] cluster as a cofactor.

It is found in the plastid. Its subcellular location is the apicoplast. The catalysed reaction is [[Fe-S] cluster scaffold protein carrying a second [4Fe-4S](2+) cluster] + N(6)-octanoyl-L-lysyl-[protein] + 2 oxidized [2Fe-2S]-[ferredoxin] + 2 S-adenosyl-L-methionine + 4 H(+) = [[Fe-S] cluster scaffold protein] + N(6)-[(R)-dihydrolipoyl]-L-lysyl-[protein] + 4 Fe(3+) + 2 hydrogen sulfide + 2 5'-deoxyadenosine + 2 L-methionine + 2 reduced [2Fe-2S]-[ferredoxin]. The protein operates within protein modification; protein lipoylation via endogenous pathway; protein N(6)-(lipoyl)lysine from octanoyl-[acyl-carrier-protein]: step 2/2. Its function is as follows. Catalyzes the radical-mediated insertion of two sulfur atoms into the C-6 and C-8 positions of the octanoyl moiety bound to the lipoyl domains of lipoate-dependent enzymes, thereby converting the octanoylated domains into lipoylated derivatives. The chain is Lipoyl synthase, apicoplast from Plasmodium vivax (strain Salvador I).